Reading from the N-terminus, the 438-residue chain is uncharacterized protein (438 aa).

A signal peptide spans 1 to 32 (MARPLLGKTSSVRRRLESLSACSIFFFLRKFC).

This is an uncharacterized protein from Frog virus 3 (isolate Goorha) (FV-3).